Consider the following 197-residue polypeptide: FMN-dependent NADH:quinone oxidoreductase (197 aa).

Residues serine 10 and 16–18 (SIS) contribute to the FMN site.

This sequence belongs to the azoreductase type 1 family. As to quaternary structure, homodimer. Requires FMN as cofactor.

It carries out the reaction 2 a quinone + NADH + H(+) = 2 a 1,4-benzosemiquinone + NAD(+). It catalyses the reaction N,N-dimethyl-1,4-phenylenediamine + anthranilate + 2 NAD(+) = 2-(4-dimethylaminophenyl)diazenylbenzoate + 2 NADH + 2 H(+). In terms of biological role, quinone reductase that provides resistance to thiol-specific stress caused by electrophilic quinones. Also exhibits azoreductase activity. Catalyzes the reductive cleavage of the azo bond in aromatic azo compounds to the corresponding amines. This is FMN-dependent NADH:quinone oxidoreductase from Erythrobacter litoralis (strain HTCC2594).